An 838-amino-acid chain; its full sequence is Glycogen phosphorylase, brain form (838 aa).

At Ala2 the chain carries N-acetylalanine. Ser15 bears the Phosphoserine mark. The AMP site is built by Asp43, Tyr197, and Arg310. At Tyr197 the chain carries Phosphotyrosine. Tyr473 carries the phosphotyrosine modification. Ser524 is modified (phosphoserine). Lys569 is a binding site for pyridoxal 5'-phosphate. The segment at 677-678 (TG) is pyridoxal 5'-phosphate. Lys681 is subject to N6-(pyridoxal phosphate)lysine.

Belongs to the glycogen phosphorylase family. Homodimer. Dimers associate into a tetramer to form the enzymatically active phosphorylase A. Pyridoxal 5'-phosphate serves as cofactor. In terms of processing, phosphorylation of Ser-15 converts phosphorylase B (unphosphorylated) to phosphorylase A.

It catalyses the reaction [(1-&gt;4)-alpha-D-glucosyl](n) + phosphate = [(1-&gt;4)-alpha-D-glucosyl](n-1) + alpha-D-glucose 1-phosphate. Activity of phosphorylase is controlled both by allosteric means (through the non-covalent binding of metabolites) and by covalent modification. Thus AMP allosterically activates, whereas ATP, ADP, and glucose-6-phosphate allosterically inhibit, phosphorylase B. Functionally, glycogen phosphorylase that regulates glycogen mobilization. Phosphorylase is an important allosteric enzyme in carbohydrate metabolism. Enzymes from different sources differ in their regulatory mechanisms and in their natural substrates. However, all known phosphorylases share catalytic and structural properties. The protein is Glycogen phosphorylase, brain form (Pygb) of Rattus norvegicus (Rat).